Reading from the N-terminus, the 338-residue chain is MKILVAMSGGVDSTVTAYKLKNLGHEVIGCYMKLHGKPNYHEENIKKVEKVANFLQIPYHILDLQKDFKNKVYMPFVDTYKEGKTPNPCALCNRFIKLGKLLEFAKSLGCEKLATGHYARLENNLIKTAVDESKDQSYFLASADKEALKYLIFPLGEMKKEDVKKFASTIEVLKSFATQKESSEICFVEDTYVQVLDQFMDTKIPGEVLDSSGKVVGKHEGYMHYTIGKRRGFEVRGAHEPHFVLKINPKQNQIIVGTKEELKISEFKLKNINLFIDAKELDCEVKIRYRSKSTPCKVEIYEDKSAKITLKDPVYGLASGQMAVFYDHDKVIASGFIE.

ATP contacts are provided by residues Ala-6 to Ser-13 and Met-32. Residue Cys-92 is the Nucleophile of the active site. Cys-92 and Cys-186 are oxidised to a cystine. Gly-116 provides a ligand contact to ATP. The interval Lys-134–Gln-136 is interaction with tRNA. Residue Cys-186 is the Cysteine persulfide intermediate of the active site. The segment at Arg-288–Tyr-289 is interaction with tRNA.

Belongs to the MnmA/TRMU family.

Its subcellular location is the cytoplasm. It carries out the reaction S-sulfanyl-L-cysteinyl-[protein] + uridine(34) in tRNA + AH2 + ATP = 2-thiouridine(34) in tRNA + L-cysteinyl-[protein] + A + AMP + diphosphate + H(+). Its function is as follows. Catalyzes the 2-thiolation of uridine at the wobble position (U34) of tRNA, leading to the formation of s(2)U34. The polypeptide is tRNA-specific 2-thiouridylase MnmA (Campylobacter jejuni subsp. jejuni serotype O:6 (strain 81116 / NCTC 11828)).